The primary structure comprises 933 residues: Protein translocase subunit SecA (933 aa).

Residues glutamine 87, 105-109 (GEGKT), and aspartate 515 contribute to the ATP site. Disordered regions lie at residues 567–588 (ESRR…PGSS), 840–861 (DVEA…RHAA), and 880–933 (AAAE…CGKL). Residues 845–856 (EEQRRQEAERMQ) are compositionally biased toward basic and acidic residues. A compositionally biased stretch (low complexity) spans 880-897 (AAAEGDSAPTGGAQQQSA). A compositionally biased stretch (basic and acidic residues) spans 905–914 (VAREGPKVGR). Cysteine 918, cysteine 920, cysteine 929, and cysteine 930 together coordinate Zn(2+). Residues 924-933 (KKYKHCCGKL) show a composition bias toward basic residues.

Belongs to the SecA family. As to quaternary structure, monomer and homodimer. Part of the essential Sec protein translocation apparatus which comprises SecA, SecYEG and auxiliary proteins SecDF-YajC and YidC. Requires Zn(2+) as cofactor.

It is found in the cell inner membrane. Its subcellular location is the cytoplasm. It carries out the reaction ATP + H2O + cellular proteinSide 1 = ADP + phosphate + cellular proteinSide 2.. Functionally, part of the Sec protein translocase complex. Interacts with the SecYEG preprotein conducting channel. Has a central role in coupling the hydrolysis of ATP to the transfer of proteins into and across the cell membrane, serving both as a receptor for the preprotein-SecB complex and as an ATP-driven molecular motor driving the stepwise translocation of polypeptide chains across the membrane. This Halorhodospira halophila (strain DSM 244 / SL1) (Ectothiorhodospira halophila (strain DSM 244 / SL1)) protein is Protein translocase subunit SecA.